The primary structure comprises 428 residues: MSQQHTLPVTLPPALSQELLNTVPPPINTQQEQREQPVPLPPPCQKVPVELPVEGPSKHEEKHVTIVKGVPEHECEQQQQAQGQERQQQHWGQNKEHQKAGNPEQQLKQEEAQREKQQLQGQLEEEKKLLDQQLDQELAKRDDQLGTKKKQLLEFPEQQEGQLKHLEQQEKPLELPEQQSGQPKYLEQQEGQLKHLEEQKGQLKHLEQQEGQLELPEQVDQPKHLEQLEKQLEHPEQQEGKLKKLEEEEEQLKHLEQQEEQLKHLEQQEGQLEHLEQQEGELKHLEQCEGQLEHLEQQEGQLELPEQQVGQSKHLEQEEKQLEHPEQQEGQLKHLGKQEAQLELPEQVGQPKHLEQQEKQLEHPEQQEEQQEGQLKDLEQQERQLEQPVFAPAPGQAQDIQQALPSKGEVLLPVDQQQQKQEVQWQQK.

2 disordered regions span residues 1–128 (MSQQ…EEKK) and 140–398 (KRDD…GQAQ). Residues 56–76 (PSKHEEKHVTIVKGVPEHECE) are compositionally biased toward basic and acidic residues. Residues 77-92 (QQQQAQGQERQQQHWG) show a composition bias toward low complexity. Basic and acidic residues-rich tracts occupy residues 107–117 (LKQEEAQREKQ), 162–174 (QLKH…KPLE), and 192–208 (QLKH…HLEQ). Low complexity predominate over residues 209 to 218 (QEGQLELPEQ). Over residues 220–297 (DQPKHLEQLE…CEGQLEHLEQ (78 aa)) the composition is skewed to basic and acidic residues. Residues 298–311 (QEGQLELPEQQVGQ) show a composition bias toward low complexity. 3 stretches are compositionally biased toward basic and acidic residues: residues 313 to 327 (KHLE…HPEQ), 352 to 366 (KHLE…HPEQ), and 374 to 385 (QLKDLEQQERQL).

The protein belongs to the involucrin family. Directly or indirectly cross-linked to cornifelin (CNFN). Post-translationally, substrate of transglutaminase. Specific glutamines or lysines are cross-linked to keratins, desmoplakin and to inter involucrin molecules. As to expression, keratinocytes of epidermis and other stratified squamous epithelia.

The protein localises to the cytoplasm. In terms of biological role, part of the insoluble cornified cell envelope (CE) of stratified squamous epithelia. The chain is Involucrin (IVL) from Cebus albifrons (White-fronted capuchin).